The chain runs to 320 residues: Lipoyl synthase (320 aa).

[4Fe-4S] cluster contacts are provided by Cys-56, Cys-61, Cys-67, Cys-82, Cys-86, Cys-89, and Ser-295. Residues 68–284 enclose the Radical SAM core domain; the sequence is WNRRTATFMI…REEALKRGFA (217 aa). Residues 300–320 are disordered; that stretch reads EQSAQAVARRTGAGRAAQTGD. The span at 303 to 320 shows a compositional bias: low complexity; it reads AQAVARRTGAGRAAQTGD.

The protein belongs to the radical SAM superfamily. Lipoyl synthase family. Requires [4Fe-4S] cluster as cofactor.

The protein resides in the cytoplasm. It catalyses the reaction [[Fe-S] cluster scaffold protein carrying a second [4Fe-4S](2+) cluster] + N(6)-octanoyl-L-lysyl-[protein] + 2 oxidized [2Fe-2S]-[ferredoxin] + 2 S-adenosyl-L-methionine + 4 H(+) = [[Fe-S] cluster scaffold protein] + N(6)-[(R)-dihydrolipoyl]-L-lysyl-[protein] + 4 Fe(3+) + 2 hydrogen sulfide + 2 5'-deoxyadenosine + 2 L-methionine + 2 reduced [2Fe-2S]-[ferredoxin]. It functions in the pathway protein modification; protein lipoylation via endogenous pathway; protein N(6)-(lipoyl)lysine from octanoyl-[acyl-carrier-protein]: step 2/2. In terms of biological role, catalyzes the radical-mediated insertion of two sulfur atoms into the C-6 and C-8 positions of the octanoyl moiety bound to the lipoyl domains of lipoate-dependent enzymes, thereby converting the octanoylated domains into lipoylated derivatives. This Symbiobacterium thermophilum (strain DSM 24528 / JCM 14929 / IAM 14863 / T) protein is Lipoyl synthase.